We begin with the raw amino-acid sequence, 64 residues long: DNA-binding protein 7b (64 aa).

It belongs to the 7 kDa DNA-binding/endoribonuclease P2 family. Monomer.

The protein localises to the cytoplasm. Can constrain negative DNA supercoils. May be involved in maintaining the integrity of the genome at high temperature. In Saccharolobus islandicus (strain HVE10/4) (Sulfolobus islandicus), this protein is DNA-binding protein 7b.